Consider the following 347-residue polypeptide: F-box/LRR-repeat/kelch-repeat protein At2g27520 (347 aa).

The region spanning 1–50 (MVRLDLPWDLVDEILSRLPATSLGRLRFTCKRWNALFKDPEFITKQFHKA) is the F-box domain. LRR repeat units follow at residues 59-82 (LSNFGVYSMSTNLKEIPNNIEIAQ), 152-177 (CKLVEIFELKSNSWRVLSKVHPNVEK), 196-220 (KFNILSFDFTTETFRSVPLPFLYQD), and 261-285 (LSWSKSFTLEFDSLRDLPVMSILRI). A Kelch 1 repeat occupies 138 to 187 (KSYDSYKILRITYGCKLVEIFELKSNSWRVLSKVHPNVEKHYYGGVSFKG). The stretch at 306-347 (MIYIVGKNGFKKLSYEKDRSNLWRLPFFFSYVPSLVGLYPPM) is one Kelch 2 repeat.

The chain is F-box/LRR-repeat/kelch-repeat protein At2g27520 from Arabidopsis thaliana (Mouse-ear cress).